A 435-amino-acid polypeptide reads, in one-letter code: Tryptophan synthase beta chain (435 aa).

Lysine 92 carries the post-translational modification N6-(pyridoxal phosphate)lysine.

The protein belongs to the TrpB family. Tetramer of two alpha and two beta chains. Pyridoxal 5'-phosphate serves as cofactor.

It carries out the reaction (1S,2R)-1-C-(indol-3-yl)glycerol 3-phosphate + L-serine = D-glyceraldehyde 3-phosphate + L-tryptophan + H2O. Its pathway is amino-acid biosynthesis; L-tryptophan biosynthesis; L-tryptophan from chorismate: step 5/5. Its function is as follows. The beta subunit is responsible for the synthesis of L-tryptophan from indole and L-serine. This Albidiferax ferrireducens (strain ATCC BAA-621 / DSM 15236 / T118) (Rhodoferax ferrireducens) protein is Tryptophan synthase beta chain.